The chain runs to 427 residues: Glutamate-1-semialdehyde 2,1-aminomutase (427 aa).

Lysine 265 bears the N6-(pyridoxal phosphate)lysine mark.

Belongs to the class-III pyridoxal-phosphate-dependent aminotransferase family. HemL subfamily. As to quaternary structure, homodimer. Pyridoxal 5'-phosphate serves as cofactor.

Its subcellular location is the cytoplasm. It carries out the reaction (S)-4-amino-5-oxopentanoate = 5-aminolevulinate. The protein operates within porphyrin-containing compound metabolism; protoporphyrin-IX biosynthesis; 5-aminolevulinate from L-glutamyl-tRNA(Glu): step 2/2. This chain is Glutamate-1-semialdehyde 2,1-aminomutase, found in Neisseria meningitidis serogroup B (strain ATCC BAA-335 / MC58).